A 393-amino-acid polypeptide reads, in one-letter code: CCA-adding enzyme (393 aa).

G27 and R30 together coordinate ATP. CTP contacts are provided by G27 and R30. The Mg(2+) site is built by D40 and D42. ATP contacts are provided by R111, D154, R157, R160, and R163. CTP is bound by residues R111, D154, R157, R160, and R163.

The protein belongs to the tRNA nucleotidyltransferase/poly(A) polymerase family. Bacterial CCA-adding enzyme type 3 subfamily. In terms of assembly, homodimer. Requires Mg(2+) as cofactor.

The enzyme catalyses a tRNA precursor + 2 CTP + ATP = a tRNA with a 3' CCA end + 3 diphosphate. The catalysed reaction is a tRNA with a 3' CCA end + 2 CTP + ATP = a tRNA with a 3' CCACCA end + 3 diphosphate. Catalyzes the addition and repair of the essential 3'-terminal CCA sequence in tRNAs without using a nucleic acid template. Adds these three nucleotides in the order of C, C, and A to the tRNA nucleotide-73, using CTP and ATP as substrates and producing inorganic pyrophosphate. tRNA 3'-terminal CCA addition is required both for tRNA processing and repair. Also involved in tRNA surveillance by mediating tandem CCA addition to generate a CCACCA at the 3' terminus of unstable tRNAs. While stable tRNAs receive only 3'-terminal CCA, unstable tRNAs are marked with CCACCA and rapidly degraded. The chain is CCA-adding enzyme from Listeria monocytogenes serotype 4a (strain HCC23).